The chain runs to 353 residues: Zinc transporter 5 (353 aa).

A signal peptide spans 1–27; sequence MATAAMTKVFVLLFLVAACYLPAHAAA. The Extracellular segment spans residues 28–48; sequence AECDCATDTAGRDKAQALRLK. The helical transmembrane segment at 49–69 threads the bilayer; the sequence is VIAIFCILAGSTVGAALPSLG. At 70 to 86 the chain is on the cytoplasmic side; that stretch reads GRFPAIQPETDVFLSVK. A helical transmembrane segment spans residues 87–107; sequence AFAGGVILATGLVHILPAAFE. The Extracellular portion of the chain corresponds to 108-121; the sequence is ALSSPCLVGGPWKR. Residues 122–142 traverse the membrane as a helical segment; the sequence is FPFAGMVAMVSAIGTLIVDTV. The Cytoplasmic portion of the chain corresponds to 143–198; it reads ATGYFHRTDAKRKAAAVADEPADDLEASDEHSHGHAHGMSVMSVAPAGEEDLVRHR. A helical membrane pass occupies residues 199–219; that stretch reads VISQVLELGVVVHSLIIGMSL. The Extracellular segment spans residues 220–230; that stretch reads GASDFPSTVRP. A helical membrane pass occupies residues 231–251; that stretch reads LVPALTFHQFFEGIGLGGCIV. The Cytoplasmic portion of the chain corresponds to 252–260; sequence QAKFRVRSV. A helical transmembrane segment spans residues 261-281; the sequence is VTMALFFSLTTPAGIVVGIGI. Residues 282 to 292 are Extracellular-facing; sequence SSVYDANSPTA. A helical membrane pass occupies residues 293–313; it reads LVVQGLLEAAAAGILVYMALV. At 314–332 the chain is on the cytoplasmic side; sequence DILAEDFMKTKVQRRGRLQ. A helical membrane pass occupies residues 333 to 353; the sequence is LAMNVALLLGAGLMSMIAIWA.

It belongs to the ZIP transporter (TC 2.A.5) family.

Its subcellular location is the cell membrane. Zinc transporter that mediates zinc uptake from the rhizosphere and may be responsible for the translocation of zinc within the plant. The polypeptide is Zinc transporter 5 (ZIP5) (Oryza sativa subsp. japonica (Rice)).